The sequence spans 99 residues: Protein Frey (99 aa).

A helical membrane pass occupies residues 13–29 (AGLSLFALYLVLAAALL). The tract at residues 64–90 (RPKHPWPRGPRPLLSRAQQRKRDGPDM) is disordered.

In terms of assembly, interacts with SPPL2C (via active sites); the interaction stabilizes FREY1 protein and inhibits SPPL2C proteolytic activity. Interacts with IZUMO1; the interaction retains IZUMO1 at the endoplasmic reticulum membrane and coordinates IZUMO1 complex assembly.

It localises to the endoplasmic reticulum membrane. Key regulator for male fertility expressed transiently in round spermatids where it recruits IZUMO1 at the endoplasmic reticulum (ER) membrane and coordinates the oolemmal binding multimeric complex (IZUMO1 complex) assembly. Upon complete assembly of the IZUMO1 complex, its ER retention is released, facilitating IZUMO1 complex export to the acrosome. Through the interaction with SPPL2C, inhibits its intramembrane protease activity directly accessing the catalytic center of an I-CLiP. The protein is Protein Frey (FREY1) of Bos taurus (Bovine).